Consider the following 968-residue polypeptide: RNA polymerase-associated protein RapA (968 aa).

Residues 164 to 334 enclose the Helicase ATP-binding domain; the sequence is DVGRRHAPRV…FARLRLLDPN (171 aa). ATP is bound at residue 177–184; it reads DEVGLGKT. Residues 280 to 283 carry the DEAH box motif; that stretch reads DEAH. The 173-residue stretch at 490 to 662 folds into the Helicase C-terminal domain; it reads RVEWLMGYLT…YLASPDETEG (173 aa).

It belongs to the SNF2/RAD54 helicase family. RapA subfamily. In terms of assembly, interacts with the RNAP. Has a higher affinity for the core RNAP than for the holoenzyme. Its ATPase activity is stimulated by binding to RNAP.

Transcription regulator that activates transcription by stimulating RNA polymerase (RNAP) recycling in case of stress conditions such as supercoiled DNA or high salt concentrations. Probably acts by releasing the RNAP, when it is trapped or immobilized on tightly supercoiled DNA. Does not activate transcription on linear DNA. Probably not involved in DNA repair. This Escherichia coli O81 (strain ED1a) protein is RNA polymerase-associated protein RapA.